A 227-amino-acid chain; its full sequence is 7-cyano-7-deazaguanine synthase (227 aa).

V11–L21 is a binding site for ATP. Positions 192, 200, 203, and 206 each coordinate Zn(2+).

Belongs to the QueC family. Zn(2+) serves as cofactor.

The catalysed reaction is 7-carboxy-7-deazaguanine + NH4(+) + ATP = 7-cyano-7-deazaguanine + ADP + phosphate + H2O + H(+). Its pathway is purine metabolism; 7-cyano-7-deazaguanine biosynthesis. Catalyzes the ATP-dependent conversion of 7-carboxy-7-deazaguanine (CDG) to 7-cyano-7-deazaguanine (preQ(0)). In Persephonella marina (strain DSM 14350 / EX-H1), this protein is 7-cyano-7-deazaguanine synthase.